The sequence spans 261 residues: MILDEIIKKTKEDLKKRKADYPQEWLGRSLAYNPYVPRDVLGALRASKSEPIKIIAEIKKASPSKGMIREDFEPIKIAQEYEQYANAFSILTEPHWFKGNIEYITQVRRYASRPILRKDFIVDKYQILEALVYGADFILLIAKALTQGELKELLEYAHHLGLEVLVETHDASDVKKAVFAGANIIGINHRNLDDFTMDMGLCEKLVPLLPNGKIIVAESGLYEYEQLRELSKIGVDAFLIGEHFMRQDDIKSAVKKIKEGE.

The protein belongs to the TrpC family.

It carries out the reaction 1-(2-carboxyphenylamino)-1-deoxy-D-ribulose 5-phosphate + H(+) = (1S,2R)-1-C-(indol-3-yl)glycerol 3-phosphate + CO2 + H2O. It participates in amino-acid biosynthesis; L-tryptophan biosynthesis; L-tryptophan from chorismate: step 4/5. The sequence is that of Indole-3-glycerol phosphate synthase from Campylobacter concisus (strain 13826).